Consider the following 417-residue polypeptide: CinA-like protein (417 aa).

This sequence belongs to the CinA family.

The chain is CinA-like protein from Leptospira biflexa serovar Patoc (strain Patoc 1 / Ames).